The following is a 142-amino-acid chain: Large ribosomal subunit protein uL13 (142 aa).

It belongs to the universal ribosomal protein uL13 family. Part of the 50S ribosomal subunit.

Its function is as follows. This protein is one of the early assembly proteins of the 50S ribosomal subunit, although it is not seen to bind rRNA by itself. It is important during the early stages of 50S assembly. The sequence is that of Large ribosomal subunit protein uL13 from Photorhabdus laumondii subsp. laumondii (strain DSM 15139 / CIP 105565 / TT01) (Photorhabdus luminescens subsp. laumondii).